Consider the following 105-residue polypeptide: MVNIPKTKNTYCKNKECKKHTLHKVTQYKKGKDSLAAQGKRRYDRKQSGYGGQTKPVFHKKAKTTKKIVLRLQCQSCKHFSQRPIKRCKHFEIGGDKKGKGTSLF.

Positions 28–57 (YKKGKDSLAAQGKRRYDRKQSGYGGQTKPV) are disordered.

This sequence belongs to the eukaryotic ribosomal protein eL42 family.

This chain is Large ribosomal subunit protein eL42z/eL42y (RPL36AA), found in Arabidopsis thaliana (Mouse-ear cress).